The chain runs to 125 residues: Glycine cleavage system H protein 1 (125 aa).

Positions 22–103 (KAYIGITDYA…PYGSWLVAVR (82 aa)) constitute a Lipoyl-binding domain. Lys-63 carries the N6-lipoyllysine modification.

This sequence belongs to the GcvH family. The glycine cleavage system is composed of four proteins: P, T, L and H. It depends on (R)-lipoate as a cofactor.

The glycine cleavage system catalyzes the degradation of glycine. The H protein shuttles the methylamine group of glycine from the P protein to the T protein. This Caldanaerobacter subterraneus subsp. tengcongensis (strain DSM 15242 / JCM 11007 / NBRC 100824 / MB4) (Thermoanaerobacter tengcongensis) protein is Glycine cleavage system H protein 1.